The following is a 350-amino-acid chain: uncharacterized protein (350 aa).

The signal sequence occupies residues 1–26; that stretch reads MKKSGWLVVALIALVVLGVVTSIAVN.

This is an uncharacterized protein from Archaeoglobus fulgidus (strain ATCC 49558 / DSM 4304 / JCM 9628 / NBRC 100126 / VC-16).